A 552-amino-acid polypeptide reads, in one-letter code: uncharacterized protein (552 aa).

Belongs to the transposase 25 family.

This is an uncharacterized protein from Sinorhizobium fredii (strain NBRC 101917 / NGR234).